The primary structure comprises 86 residues: Small ribosomal subunit protein bS20 (86 aa).

Positions M1–M27 are disordered.

This sequence belongs to the bacterial ribosomal protein bS20 family.

In terms of biological role, binds directly to 16S ribosomal RNA. The protein is Small ribosomal subunit protein bS20 of Vibrio atlanticus (strain LGP32) (Vibrio splendidus (strain Mel32)).